The primary structure comprises 131 residues: C-C motif chemokine 21 (131 aa).

Positions 1–23 are cleaved as a signal peptide; that stretch reads MAQSLALSLLILVLAFGIPGTQG. 3 cysteine pairs are disulfide-bonded: Cys-31-Cys-57, Cys-32-Cys-75, and Cys-103-Cys-119. Residues 89-131 form a disordered region; sequence HLDKTPTPRKPVQGCRKDRGVPKNGKKGKGCKRTEQSQTPKGP.

Belongs to the intercrine beta (chemokine CC) family. Monomer. Binds to CCR7. Interacts with PDPN; relocalizes PDPN to the basolateral membrane. Interacts with TNFAIP6 (via Link domain). Interacts with GPR174.

It is found in the secreted. Functionally, inhibits hemopoiesis and stimulates chemotaxis. Chemotactic in vitro for thymocytes and activated T-cells, but not for B-cells, macrophages, or neutrophils. Shows preferential activity towards naive T-cells. May play a role in mediating homing of lymphocytes to secondary lymphoid organs. Binds to atypical chemokine receptor ACKR4 and mediates the recruitment of beta-arrestin (ARRB1/2) to ACKR4. In Macaca mulatta (Rhesus macaque), this protein is C-C motif chemokine 21 (CCL21).